The sequence spans 624 residues: Alpha-amylase 1 (624 aa).

The N-terminal stretch at 1–28 (MLLINFFIAVLGVISLSPIVVARYILRR) is a signal peptide. One can recognise a CBM21 domain in the interval 40–133 (ESVTGSNHVQ…SDTSVTYTTS (94 aa)). Cys-177 and Cys-185 are joined by a disulfide. Position 230 (Trp-230) interacts with substrate. Residue Asn-268 participates in Ca(2+) binding. His-269 is a substrate binding site. A disulfide bridge links Cys-297 with Cys-311. N-linked (GlcNAc...) asparagine glycosylation is present at Asn-304. Ca(2+) is bound by residues Glu-309 and Asp-322. Residue Asn-344 is glycosylated (N-linked (GlcNAc...) asparagine). Position 351 (Arg-351) interacts with substrate. Ca(2+) contacts are provided by Asp-353, His-357, and Glu-377. Residue Asp-353 is the Nucleophile of the active site. Residue 356 to 357 (KH) participates in substrate binding. The active-site Proton donor is the Glu-377. Residue Gly-381 coordinates substrate. Cys-387 and Cys-430 form a disulfide bridge. The substrate site is built by Asp-444 and Arg-491. Cys-587 and Cys-622 are joined by a disulfide.

Belongs to the glycosyl hydrolase 13 family. Requires Ca(2+) as cofactor.

The protein resides in the secreted. The catalysed reaction is Endohydrolysis of (1-&gt;4)-alpha-D-glucosidic linkages in polysaccharides containing three or more (1-&gt;4)-alpha-linked D-glucose units.. This Lipomyces kononenkoae (Yeast) protein is Alpha-amylase 1 (LKA1).